The chain runs to 784 residues: Ribosome biogenesis protein BOP1 homolog (784 aa).

Positions 1–11 (MTKKLALKRKG) are enriched in basic residues. The segment at 1 to 159 (MTKKLALKRK…DSDTSDEEDI (159 aa)) is disordered. Acidic residues-rich tracts occupy residues 27–36 (SENEEEEEDL), 45–54 (EDSTDDEGID), 62–73 (SEELQFESDEEG), and 84–111 (AEEDEESSDEDDDEEEGSSDEEGEEDEE). The span at 112-123 (KDSKSKQADDKP) shows a compositional bias: basic and acidic residues. A compositionally biased stretch (low complexity) spans 124-133 (SSSGAASKKA). Over residues 138-148 (LSKRDTSKPEY) the composition is skewed to basic and acidic residues. Residues 149 to 158 (QDSDTSDEED) are compositionally biased toward acidic residues. WD repeat units follow at residues 445–486 (GHTD…RTIE), 488–526 (DEVVRCVAWCPNPKLSIIAVATGNRLLLVNPKVGDKVLV), 570–612 (THFK…SQIP), 615–653 (KSKGLIQFVLFHPVKPCFFVATQHNIRIYDLVKQELVKK), 656–695 (TNSKWISGMSIHPKGDNLLVSTYDKKMLWFDLDLSTKPYQ), 699–738 (LHRNAVRSVAFHLRYPLFASGSDDQAVIVSHGMVYNDLLQ), and 754–784 (RDEFGVLDVNWHPVQPWIFSTGADSTIRLYT).

The protein belongs to the WD repeat BOP1/ERB1 family.

The protein resides in the nucleus. Its subcellular location is the nucleolus. It localises to the nucleoplasm. In terms of biological role, required for maturation of ribosomal RNAs and formation of the large ribosomal subunit. This chain is Ribosome biogenesis protein BOP1 homolog, found in Drosophila yakuba (Fruit fly).